The primary structure comprises 489 residues: Inactive receptor-like serine/threonine-protein kinase At2g40270 (489 aa).

Residues M1–S23 form the signal peptide. The Extracellular segment spans residues L24–L139. The segment at K67–P130 is disordered. The segment covering A81 to P90 has biased composition (low complexity). The segment covering T99–V116 has biased composition (polar residues). Positions S117–P130 are enriched in low complexity. The helical transmembrane segment at V140–F160 threads the bilayer. Residues T161 to A489 are Cytoplasmic-facing. Residues E200–L460 enclose the Protein kinase domain.

This sequence belongs to the protein kinase superfamily. Ser/Thr protein kinase family.

The protein resides in the cell membrane. This Arabidopsis thaliana (Mouse-ear cress) protein is Inactive receptor-like serine/threonine-protein kinase At2g40270.